The sequence spans 403 residues: Na(+)/H(+) antiporter NhaA (403 aa).

12 consecutive transmembrane segments (helical) span residues 25–45 (IAGL…NSPF), 70–90 (LILW…GLEI), 105–125 (IALP…IFLA), 136–156 (GWAV…AMLG), 165–185 (VFLT…IALA), 188–208 (EGLS…LIVL), 213–233 (VASL…VLES), 234–254 (GVHS…RVSG), 269–289 (VALL…LGGV), 302–322 (IILG…GLAV), 340–360 (GAAL…GLAF), and 369–389 (VNLA…VVLA).

Belongs to the NhaA Na(+)/H(+) (TC 2.A.33) antiporter family.

It is found in the cell inner membrane. The enzyme catalyses Na(+)(in) + 2 H(+)(out) = Na(+)(out) + 2 H(+)(in). Na(+)/H(+) antiporter that extrudes sodium in exchange for external protons. This chain is Na(+)/H(+) antiporter NhaA, found in Maricaulis maris (strain MCS10) (Caulobacter maris).